The chain runs to 582 residues: SHC-transforming protein 2 (582 aa).

Disordered regions lie at residues Met-1 to Thr-24 and Gly-47 to Gly-70. The segment covering Arg-8–Glu-20 has biased composition (pro residues). Residues Leu-147–Asp-329 enclose the PID domain. The segment at Glu-330 to Pro-486 is CH1. Tyr-338, Tyr-339, and Tyr-414 each carry phosphotyrosine. Residues Pro-460–Gln-481 form a disordered region. Positions Trp-487 to Val-578 constitute an SH2 domain.

In terms of assembly, interacts with the Trk receptors in a phosphotyrosine-dependent manner and MEGF12. Once activated, binds to GRB2. Phosphorylated on tyrosines by the Trk receptors. In terms of tissue distribution, expressed in brain. Expressed at high level in the hypothalamus and at low level in the caudate nucleus.

In terms of biological role, signaling adapter that couples activated growth factor receptors to signaling pathway in neurons. Involved in the signal transduction pathways of neurotrophin-activated Trk receptors in cortical neurons. In Homo sapiens (Human), this protein is SHC-transforming protein 2 (SHC2).